Reading from the N-terminus, the 376-residue chain is Erythronate-4-phosphate dehydrogenase (376 aa).

2 residues coordinate substrate: S45 and T67. D147 is a binding site for NAD(+). R209 is a catalytic residue. D233 serves as a coordination point for NAD(+). Residue E238 is part of the active site. Catalysis depends on H255, which acts as the Proton donor. G258 provides a ligand contact to NAD(+). Y259 lines the substrate pocket.

It belongs to the D-isomer specific 2-hydroxyacid dehydrogenase family. PdxB subfamily. Homodimer.

The protein resides in the cytoplasm. The catalysed reaction is 4-phospho-D-erythronate + NAD(+) = (R)-3-hydroxy-2-oxo-4-phosphooxybutanoate + NADH + H(+). Its pathway is cofactor biosynthesis; pyridoxine 5'-phosphate biosynthesis; pyridoxine 5'-phosphate from D-erythrose 4-phosphate: step 2/5. Its function is as follows. Catalyzes the oxidation of erythronate-4-phosphate to 3-hydroxy-2-oxo-4-phosphonooxybutanoate. The chain is Erythronate-4-phosphate dehydrogenase from Shewanella oneidensis (strain ATCC 700550 / JCM 31522 / CIP 106686 / LMG 19005 / NCIMB 14063 / MR-1).